A 260-amino-acid polypeptide reads, in one-letter code: Small ribosomal subunit protein uS2 (260 aa).

Belongs to the universal ribosomal protein uS2 family.

The sequence is that of Small ribosomal subunit protein uS2 from Gluconacetobacter diazotrophicus (strain ATCC 49037 / DSM 5601 / CCUG 37298 / CIP 103539 / LMG 7603 / PAl5).